We begin with the raw amino-acid sequence, 127 residues long: Cyclin-dependent kinase 2-associated protein 2 (127 aa).

Residues 1–49 (MSYKPIAPAPSSTPGSSTPGPGTPVPTAGSVPSPSGSVPGAAGPFRPLF) form a disordered region. Low complexity predominate over residues 9–44 (APSSTPGSSTPGPGTPVPTAGSVPSPSGSVPGAAGP). Positions 65 to 107 (PPGAQGSQSTYTDLLSVIEEMGKEIRPTYAGSKSAMERLKRGI) are interaction with CDK2.

Belongs to the CDK2AP family. In terms of assembly, component of the nucleosome remodeling and deacetylase (NuRD) repressor complex, composed of core proteins MTA1, MTA2, MTA3, RBBP4, RBBP7, HDAC1, HDAC2, MBD2, MBD3, and peripherally associated proteins CDK2AP1, CDK2AP2, GATAD2A, GATAD2B, CHD3, CHD4 and CHD5. The exact stoichiometry of the NuRD complex is unknown, and some subunits such as MBD2 and MBD3, GATAD2A and GATAD2B, and CHD3, CHD4 and CHD5 define mutually exclusive NuRD complexes. Interacts with CDK2AP1. Interacts with CDK2. Interacts with MAPK1. Phosphorylated by MAPK1 and CDK2.

It localises to the cytoplasm. Its subcellular location is the nucleus. In terms of biological role, acts as a component of the histone deacetylase NuRD complex which participates in the remodeling of chromatin. Inhibits cell cycle G1/S phase transition by repressing CDK2 expression and activation; represses CDK2 activation by inhibiting its interaction with cyclin E and A. Plays a role in regulating the self-renewal of embryonic stem cells (ESCs) and in maintaining cell survival during terminal differentiation of ESCs. Regulates microtubule organization of metaphase II oocytes. This chain is Cyclin-dependent kinase 2-associated protein 2 (CDK2AP2), found in Bos taurus (Bovine).